The chain runs to 515 residues: FAD-dependent oxidoreductase domain-containing protein 1 homolog (515 aa).

A disordered region spans residues 18 to 37 (AGATSNGSGSSGGDKSGEDL). The helical transmembrane segment at 100–116 (VLIIGGGGVGSSIAYWL) threads the bilayer.

Associates with mitochondrial complex I assembly intermediates during its biogenesis. The cofactor is FAD.

The protein localises to the mitochondrion inner membrane. In terms of biological role, involved in the assembly of the mitochondrial membrane respiratory chain NADH dehydrogenase (Complex I). In Drosophila melanogaster (Fruit fly), this protein is FAD-dependent oxidoreductase domain-containing protein 1 homolog.